Here is a 121-residue protein sequence, read N- to C-terminus: Putative SNURF-like protein (121 aa).

Belongs to the SNURF family.

This chain is Putative SNURF-like protein (SNURFL), found in Homo sapiens (Human).